We begin with the raw amino-acid sequence, 200 residues long: Crossover junction endodeoxyribonuclease RuvC (200 aa).

Residues Asp18, Glu78, and Asp151 contribute to the active site. Mg(2+)-binding residues include Asp18, Glu78, and Asp151.

This sequence belongs to the RuvC family. Homodimer which binds Holliday junction (HJ) DNA. The HJ becomes 2-fold symmetrical on binding to RuvC with unstacked arms; it has a different conformation from HJ DNA in complex with RuvA. In the full resolvosome a probable DNA-RuvA(4)-RuvB(12)-RuvC(2) complex forms which resolves the HJ. Mg(2+) is required as a cofactor.

The protein resides in the cytoplasm. The catalysed reaction is Endonucleolytic cleavage at a junction such as a reciprocal single-stranded crossover between two homologous DNA duplexes (Holliday junction).. Its function is as follows. The RuvA-RuvB-RuvC complex processes Holliday junction (HJ) DNA during genetic recombination and DNA repair. Endonuclease that resolves HJ intermediates. Cleaves cruciform DNA by making single-stranded nicks across the HJ at symmetrical positions within the homologous arms, yielding a 5'-phosphate and a 3'-hydroxyl group; requires a central core of homology in the junction. The consensus cleavage sequence is 5'-(A/T)TT(C/G)-3'. Cleavage occurs on the 3'-side of the TT dinucleotide at the point of strand exchange. HJ branch migration catalyzed by RuvA-RuvB allows RuvC to scan DNA until it finds its consensus sequence, where it cleaves and resolves the cruciform DNA. The sequence is that of Crossover junction endodeoxyribonuclease RuvC from Cytophaga hutchinsonii (strain ATCC 33406 / DSM 1761 / CIP 103989 / NBRC 15051 / NCIMB 9469 / D465).